The sequence spans 209 residues: Large ribosomal subunit protein uL4 (209 aa).

Residues 45 to 78 (RQGTHKAKERAEVAGSTRKIKKQKGTGTARAGSA) are disordered.

Belongs to the universal ribosomal protein uL4 family. Part of the 50S ribosomal subunit.

In terms of biological role, one of the primary rRNA binding proteins, this protein initially binds near the 5'-end of the 23S rRNA. It is important during the early stages of 50S assembly. It makes multiple contacts with different domains of the 23S rRNA in the assembled 50S subunit and ribosome. Forms part of the polypeptide exit tunnel. This is Large ribosomal subunit protein uL4 from Flavobacterium psychrophilum (strain ATCC 49511 / DSM 21280 / CIP 103535 / JIP02/86).